A 285-amino-acid polypeptide reads, in one-letter code: Urease accessory protein UreD (285 aa).

Belongs to the UreD family. In terms of assembly, ureD, UreF and UreG form a complex that acts as a GTP-hydrolysis-dependent molecular chaperone, activating the urease apoprotein by helping to assemble the nickel containing metallocenter of UreC. The UreE protein probably delivers the nickel.

The protein localises to the cytoplasm. Its function is as follows. Required for maturation of urease via the functional incorporation of the urease nickel metallocenter. This is Urease accessory protein UreD from Picosynechococcus sp. (strain ATCC 27264 / PCC 7002 / PR-6) (Agmenellum quadruplicatum).